A 492-amino-acid chain; its full sequence is Glutamyl-tRNA(Gln) amidotransferase subunit A (492 aa).

Residues lysine 78 and serine 158 each act as charge relay system in the active site. Catalysis depends on serine 182, which acts as the Acyl-ester intermediate.

It belongs to the amidase family. GatA subfamily. As to quaternary structure, heterotrimer of A, B and C subunits.

The enzyme catalyses L-glutamyl-tRNA(Gln) + L-glutamine + ATP + H2O = L-glutaminyl-tRNA(Gln) + L-glutamate + ADP + phosphate + H(+). Its function is as follows. Allows the formation of correctly charged Gln-tRNA(Gln) through the transamidation of misacylated Glu-tRNA(Gln) in organisms which lack glutaminyl-tRNA synthetase. The reaction takes place in the presence of glutamine and ATP through an activated gamma-phospho-Glu-tRNA(Gln). This is Glutamyl-tRNA(Gln) amidotransferase subunit A from Rhodopseudomonas palustris (strain BisB5).